We begin with the raw amino-acid sequence, 462 residues long: Ribosomal protein uS12 methylthiotransferase RimO (462 aa).

One can recognise an MTTase N-terminal domain in the interval 10–125 (PRIGMVSLGC…VLDAVHRNLP (116 aa)). Residues Cys19, Cys55, Cys84, Cys160, Cys164, and Cys167 each contribute to the [4Fe-4S] cluster site. The region spanning 146-388 (LTPRHYAYLK…AVAEALSSAK (243 aa)) is the Radical SAM core domain. The region spanning 390-462 (QRRVGATMQV…RGHDLLAQPI (73 aa)) is the TRAM domain.

Belongs to the methylthiotransferase family. RimO subfamily. The cofactor is [4Fe-4S] cluster.

The protein localises to the cytoplasm. The enzyme catalyses L-aspartate(89)-[ribosomal protein uS12]-hydrogen + (sulfur carrier)-SH + AH2 + 2 S-adenosyl-L-methionine = 3-methylsulfanyl-L-aspartate(89)-[ribosomal protein uS12]-hydrogen + (sulfur carrier)-H + 5'-deoxyadenosine + L-methionine + A + S-adenosyl-L-homocysteine + 2 H(+). Catalyzes the methylthiolation of an aspartic acid residue of ribosomal protein uS12. The chain is Ribosomal protein uS12 methylthiotransferase RimO from Verminephrobacter eiseniae (strain EF01-2).